The sequence spans 153 residues: Myosin regulatory light chain, smooth muscle (153 aa).

3 consecutive EF-hand domains span residues 12–47, 81–116, and 117–152; these read SQIQ…LGRG, DPEE…QADR, and FSQS…GQEE. 4 residues coordinate Ca(2+): aspartate 25, asparagine 27, aspartate 29, and aspartate 36.

In molluscan muscle, calcium regulation is associated with myosin rather than with actin. Muscle myosin contains two types of light chains: the catalytic light chain, essential for ATPase activity, and the regulatory light chain, a calcium-binding protein responsible for Ca(2+) dependent binding and Ca(2+) dependent Mg-ATPase activity. This Halocynthia roretzi (Sea squirt) protein is Myosin regulatory light chain, smooth muscle.